The chain runs to 527 residues: Flagellar radial spoke protein 5 (527 aa).

The tract at residues 1 to 22 (MSEPGEEPVAAPAGPAPDPVLN) is disordered. Residues 101–153 (RKWNELTIQAKQLEQEVAGLKGPDAEAKQAELENVKVQIADAEAAVAEVKQSF) adopt a coiled-coil conformation. 2 positions are modified to asymmetric dimethylarginine: R191 and R366.

It belongs to the aldo/keto reductase family. Post-translationally, asymmetrically dimethylated at Arg-191 and Arg-366 during flagellum resorption. Probably methylated by PRMT1.

The protein resides in the cytoplasm. It localises to the cytoskeleton. Its subcellular location is the flagellum axoneme. In terms of biological role, flagellar radial spokes contribute to the regulation of dynein arm activity and thus the pattern of flagellar bending. They consist of a thin stalk, which is attached to the a subfiber of the outer doublet microtubule, and a bulbous head, which is attached to the stalk and appears to interact with the projections from the central pair of microtubules. This chain is Flagellar radial spoke protein 5, found in Chlamydomonas reinhardtii (Chlamydomonas smithii).